We begin with the raw amino-acid sequence, 825 residues long: NT-3 growth factor receptor (825 aa).

The signal sequence occupies residues 1–31; that stretch reads MDVSLCPAKCSFWRIFLLGSVWLDYVGSVLA. Cystine bridges form between C32-C38 and C36-C45. Topologically, residues 32 to 429 are extracellular; sequence CPANCVCSKT…TVTHKPEEDT (398 aa). 3 N-linked (GlcNAc...) asparagine glycosylation sites follow: N68, N72, and N79. 2 LRR repeats span residues 104–125 and 128–149; these read GLQK…AFAK and HLRY…LFQT. Residues N133 and N163 are each glycosylated (N-linked (GlcNAc...) asparagine). Residues 160 to 209 form the LRRCT domain; it reads NFFNCSCDIRWMQLWQEQGEARLDSQSLYCISADGSQLPLFRMNISQCDL. 2 disulfide bridges follow: C164/C189 and C166/C207. N203, N218, N232, N259, N267, N272, and N294 each carry an N-linked (GlcNAc...) asparagine glycan. 2 Ig-like C2-type domains span residues 210 to 300 and 309 to 382; these read PEIS…VALT and SLVE…IAKN. The cysteines at positions 231 and 284 are disulfide-linked. A disulfide bridge links C320 with C362. Residues N375 and N388 are each glycosylated (N-linked (GlcNAc...) asparagine). A helical membrane pass occupies residues 430 to 453; that stretch reads FGVSIAVGLAAFACVLLVVLFIMI. At 454–825 the chain is on the cytoplasmic side; it reads NKYGRRSKFG…ATPIYLDILG (372 aa). Position 493 is a phosphoserine (S493). A Phosphotyrosine modification is found at Y516. The Protein kinase domain occupies 538–825; the sequence is IVLKRELGEG…ATPIYLDILG (288 aa). ATP contacts are provided by residues 544–552 and K572; that span reads LGEGAFGKV. D679 (proton acceptor) is an active-site residue. Residues Y705, Y709, and Y710 each carry the phosphotyrosine; by autocatalysis modification.

It belongs to the protein kinase superfamily. Tyr protein kinase family. Insulin receptor subfamily. As to quaternary structure, exists in a dynamic equilibrium between monomeric (low affinity) and dimeric (high affinity) structures. Binds SH2B2. Interacts with SQSTM1 and KIDINS220. Interacts with PTPRS. Interacts with MAPK8IP3/JIP3. Post-translationally, ligand-mediated auto-phosphorylation. As to expression, isoform 2 expression is restricted to specific areas in adult brain. Isoform 3 transcripts are readily detected early during embryogenesis and are expressed predominantly in adult brain and gonads.

Its subcellular location is the membrane. The enzyme catalyses L-tyrosyl-[protein] + ATP = O-phospho-L-tyrosyl-[protein] + ADP + H(+). Functionally, receptor tyrosine kinase involved in nervous system and probably heart development. Upon binding of its ligand NTF3/neurotrophin-3, NTRK3 autophosphorylates and activates different signaling pathways, including the phosphatidylinositol 3-kinase/AKT and the MAPK pathways, that control cell survival and differentiation. The polypeptide is NT-3 growth factor receptor (Ntrk3) (Mus musculus (Mouse)).